A 484-amino-acid polypeptide reads, in one-letter code: Chromosomal replication initiator protein DnaA (484 aa).

The tract at residues 1-83 is domain I, interacts with DnaA modulators; sequence MQPPSQDWAS…LAWRTVWPGI (83 aa). A domain II region spans residues 83–146; sequence IAEVKVSVRN…EKKAEGEDQN (64 aa). The tract at residues 110–146 is disordered; sequence GDQPRPLPKKPAKKKQSVPATPKSTSPEKKAEGEDQN. Basic residues predominate over residues 116 to 125; that stretch reads LPKKPAKKKQ. Residues 135–146 show a composition bias toward basic and acidic residues; it reads SPEKKAEGEDQN. Positions 147-364 are domain III, AAA+ region; it reads QFEERYNFDN…GALNRVVAYA (218 aa). 4 residues coordinate ATP: glycine 191, glycine 193, lysine 194, and threonine 195. The interval 365–484 is domain IV, binds dsDNA; that stretch reads TLSNRPINMD…VRLLMRQFEG (120 aa).

It belongs to the DnaA family. As to quaternary structure, oligomerizes as a right-handed, spiral filament on DNA at oriC.

It localises to the cytoplasm. Functionally, plays an essential role in the initiation and regulation of chromosomal replication. ATP-DnaA binds to the origin of replication (oriC) to initiate formation of the DNA replication initiation complex once per cell cycle. Binds the DnaA box (a 9 base pair repeat at the origin) and separates the double-stranded (ds)DNA. Forms a right-handed helical filament on oriC DNA; dsDNA binds to the exterior of the filament while single-stranded (ss)DNA is stabiized in the filament's interior. The ATP-DnaA-oriC complex binds and stabilizes one strand of the AT-rich DNA unwinding element (DUE), permitting loading of DNA polymerase. After initiation quickly degrades to an ADP-DnaA complex that is not apt for DNA replication. Binds acidic phospholipids. This Zymomonas mobilis subsp. mobilis (strain ATCC 31821 / ZM4 / CP4) protein is Chromosomal replication initiator protein DnaA.